We begin with the raw amino-acid sequence, 147 residues long: Nudix hydrolase 1 (147 aa).

An N-acetylserine modification is found at serine 2. A Nudix hydrolase domain is found at 7–140; sequence IPRVAVVVFI…EKLFGSGFNP (134 aa). Residues 41–62 carry the Nudix box motif; sequence GHLEFGESFEECAAREVMEETG. Mg(2+) is bound by residues glutamate 56 and glutamate 60.

The protein belongs to the Nudix hydrolase family. As to quaternary structure, homodimer. The cofactor is Mg(2+). Mn(2+) is required as a cofactor. Expressed in roots, stems and leaves.

The protein resides in the cytoplasm. The catalysed reaction is 7,8-dihydroneopterin 3'-triphosphate + H2O = 7,8-dihydroneopterin 3'-phosphate + diphosphate + H(+). It carries out the reaction NAD(+) + H2O = beta-nicotinamide D-ribonucleotide + AMP + 2 H(+). It catalyses the reaction NADH + H2O = reduced beta-nicotinamide D-ribonucleotide + AMP + 2 H(+). The enzyme catalyses 8-oxo-dGTP + H2O = 8-oxo-dGMP + diphosphate + H(+). Functionally, mediates the hydrolysis of some nucleoside diphosphate derivatives. Its substrate specificity is unclear. In vitro, it can use NTP, dNTP, 8-oxo-GTP, 8-oxo-dGTP, dGTP, dATP, dTTP or dihydroneopterin triphosphate (DHNTP) as substrate. Has some NADH pyrophosphatase activity in vitro; however, such activity may not be relevant in vivo due to the high concentration of manganese used during the experiments. Plays an important role in protection against oxidative DNA and RNA damage by removing oxidatively damaged form of guanine. In Arabidopsis thaliana (Mouse-ear cress), this protein is Nudix hydrolase 1 (NUDT1).